The following is a 386-amino-acid chain: MKRTLGHALIIIGAALIVIAVLLPTFLVPRLRVIPLDTVSDTITEVRDGTLLDSSQLGKNEPTPNRKNDPRCKAETDEEKRDLPVHCFINDKTPMQSKRHVEIEEPADEKIATLQVGTTLLRDDRKEPKNLINAILDRITVDRSTAYPVDDPISSVAINAPQGGSDTKPPTFTRPGIQYQFPFGAQKKSYPYYDVQAMRNFEIDFVGEETQDGVKVYKYSMTIPPQNLYESLTEHFTRDGRKLTEADKSSLASMRLSFPAHKWGLEGDDDVELDRYYTNVRTVRVEPTSGVIVNGTEEMFMFYAKDDKEAEEIASKAGREKEAKEQNRTAMKYTAQWDEGSKGRQMDRAKEARKSLTIGGTVAPWILGILGLVPIVIGFRIRSKSA.

A signal peptide spans 1 to 35; the sequence is MKRTLGHALIIIGAALIVIAVLLPTFLVPRLRVIP. The segment covering 53–63 has biased composition (polar residues); that stretch reads DSSQLGKNEPT. The tract at residues 53 to 78 is disordered; sequence DSSQLGKNEPTPNRKNDPRCKAETDE. A compositionally biased stretch (basic and acidic residues) spans 64-78; that stretch reads PNRKNDPRCKAETDE.

Belongs to the PorA family.

It localises to the secreted. The protein localises to the cell wall. Functionally, forms water-filled channels that favor the permeation of cations. This Corynebacterium amycolatum protein is Porin PorA.